Here is a 64-residue protein sequence, read N- to C-terminus: Large ribosomal subunit protein bL35 (64 aa).

This sequence belongs to the bacterial ribosomal protein bL35 family.

The sequence is that of Large ribosomal subunit protein bL35 from Vibrio atlanticus (strain LGP32) (Vibrio splendidus (strain Mel32)).